The chain runs to 32 residues: Natriuretic peptide Coa_NP2 (32 aa).

Cys8 and Cys24 are oxidised to a cystine.

Belongs to the natriuretic peptide family. Snake NP subfamily. As to expression, expressed by the venom gland.

The protein localises to the secreted. Its function is as follows. Snake venom natriuretic peptide that exhibits hypotensive and vasorelaxant effects. Produces a dose-dependent hypotension in rats, followed by significant increases in concentrations of markers of nitric oxide (NO) formation measured in the plasma and vasorelaxation in a thoracic aortic ring bath. The peptide may exert its hypotensive action, at least in part, through stimulation of NO production. The vasorelaxant effect is endothelium-dependent and does not appear to be mediated by the natriuretic peptide receptor-A, as its action is not modified by isatin (a potent NPR1 antagonist). May act by activating the natriuretic peptide receptor-B (NPR2). The polypeptide is Natriuretic peptide Coa_NP2 (Crotalus lutosus abyssus (Grand Canyon rattlesnake)).